Reading from the N-terminus, the 462-residue chain is ATP synthase subunit beta (462 aa).

151–158 (GGAGVGKT) serves as a coordination point for ATP.

Belongs to the ATPase alpha/beta chains family. As to quaternary structure, F-type ATPases have 2 components, CF(1) - the catalytic core - and CF(0) - the membrane proton channel. CF(1) has five subunits: alpha(3), beta(3), gamma(1), delta(1), epsilon(1). CF(0) has three main subunits: a(1), b(2) and c(9-12). The alpha and beta chains form an alternating ring which encloses part of the gamma chain. CF(1) is attached to CF(0) by a central stalk formed by the gamma and epsilon chains, while a peripheral stalk is formed by the delta and b chains.

Its subcellular location is the cell inner membrane. It carries out the reaction ATP + H2O + 4 H(+)(in) = ADP + phosphate + 5 H(+)(out). Produces ATP from ADP in the presence of a proton gradient across the membrane. The catalytic sites are hosted primarily by the beta subunits. The chain is ATP synthase subunit beta from Chlorobaculum parvum (strain DSM 263 / NCIMB 8327) (Chlorobium vibrioforme subsp. thiosulfatophilum).